Here is a 247-residue protein sequence, read N- to C-terminus: Phosphoribosylaminoimidazole-succinocarboxamide synthase (247 aa).

This sequence belongs to the SAICAR synthetase family.

It carries out the reaction 5-amino-1-(5-phospho-D-ribosyl)imidazole-4-carboxylate + L-aspartate + ATP = (2S)-2-[5-amino-1-(5-phospho-beta-D-ribosyl)imidazole-4-carboxamido]succinate + ADP + phosphate + 2 H(+). The protein operates within purine metabolism; IMP biosynthesis via de novo pathway; 5-amino-1-(5-phospho-D-ribosyl)imidazole-4-carboxamide from 5-amino-1-(5-phospho-D-ribosyl)imidazole-4-carboxylate: step 1/2. This is Phosphoribosylaminoimidazole-succinocarboxamide synthase from Synechococcus sp. (strain JA-2-3B'a(2-13)) (Cyanobacteria bacterium Yellowstone B-Prime).